A 295-amino-acid polypeptide reads, in one-letter code: F-box only protein 6 (295 aa).

An F-box domain is found at 1-48 (MVHINELPENILLELFIHIPAPQLLRNCRLVCRLWRDLIDVVSLWKRK). One can recognise an FBA domain in the interval 69–250 (FYILCSLQRN…VTNSSIIISH (182 aa)). Phosphoserine is present on residues Ser249 and Ser276. Residue Thr280 is modified to Phosphothreonine.

In terms of assembly, interacts with CHEK1 and CUL1. Part of a SCF (SKP1-cullin-F-box) protein ligase complex. Interacts with VCP. Present in liver and kidney (at protein level). Widely expressed.

The protein localises to the cytoplasm. Its pathway is protein modification; protein ubiquitination. Functionally, substrate-recognition component of some SCF (SKP1-CUL1-F-box protein)-type E3 ubiquitin ligase complexes. Involved in DNA damage response by specifically recognizing activated CHEK1 (phosphorylated on 'Ser-345'), promoting its ubiquitination and degradation. Ubiquitination of CHEK1 is required to ensure that activated CHEK1 does not accumulate as cells progress through S phase, or when replication forks encounter transient impediments during normal DNA replication. Involved in endoplasmic reticulum-associated degradation pathway (ERAD) for misfolded lumenal proteins by recognizing and binding sugar chains on unfolded glycoproteins that are retrotranslocated into the cytosol and promoting their ubiquitination and subsequent degradation. Able to recognize and bind denatured glycoproteins, which are modified with not only high-mannose but also complex-type oligosaccharides. Also recognizes sulfated glycans. This is F-box only protein 6 (Fbxo6) from Mus musculus (Mouse).